Here is a 375-residue protein sequence, read N- to C-terminus: Actin, cytoplasmic (375 aa).

Belongs to the actin family.

It is found in the cytoplasm. Its subcellular location is the cytoskeleton. The catalysed reaction is ATP + H2O = ADP + phosphate + H(+). In terms of biological role, actins are highly conserved proteins that are involved in various types of cell motility and are ubiquitously expressed in all eukaryotic cells. This is Actin, cytoplasmic from Oxytricha trifallax (Sterkiella histriomuscorum).